The chain runs to 195 residues: Phenoloxidase subunit 1 (195 aa).

His10 contacts Cu cation. N-linked (GlcNAc...) asparagine glycans are attached at residues Asn77, Asn97, and Asn98.

It belongs to the tyrosinase family. Heterodimer. Cu(2+) serves as cofactor.

The protein resides in the secreted. The enzyme catalyses 2 L-dopa + O2 = 2 L-dopaquinone + 2 H2O. The catalysed reaction is L-tyrosine + O2 = L-dopaquinone + H2O. In terms of biological role, this is a copper-containing oxidase that functions in the formation of pigments such as melanins and other polyphenolic compounds. Catalyzes the rate-limiting conversions of tyrosine to DOPA, DOPA to DOPA-quinone and possibly 5,6 dihydroxyindole to indole-5'6 quinone. This Simulium damnosum (Black fly) protein is Phenoloxidase subunit 1.